The sequence spans 206 residues: Acidic proline-rich protein PRP33 (206 aa).

Residues 1–13 (MLVVLLTAALLVL) form the signal peptide. Residues 15 to 206 (SAHGSDEEVI…EQPSYLWFSS (192 aa)) are disordered. Positions 55 to 71 (ENGDGDDSDDGDDDGSG) are enriched in acidic residues. 6 tandem repeats follow at residues 80-97 (PPPH…HHHG), 98-115 (PPPS…NPQG), 116-133 (PPPQ…NPQG), 134-152 (PPPQ…KPQG), 153-170 (PPPQ…NPQG), and 171-189 (PPPQ…KPQD). Positions 80-189 (PPPHGGNHQR…RPPQPRKPQD (110 aa)) are 6 X 18 AA approximate tandem repeats. Over residues 103-112 (GPQTSSQPGN) the composition is skewed to low complexity. Pro residues predominate over residues 113–174 (PQGPPPQGGP…PGNPQGPPPQ (62 aa)).

It is found in the secreted. May protect teeth by binding to tannins. In Rattus norvegicus (Rat), this protein is Acidic proline-rich protein PRP33 (Prpg1).